A 340-amino-acid chain; its full sequence is DnaJ homolog subfamily B member 1 (340 aa).

The region spanning glycine 2–glutamate 70 is the J domain. The disordered stretch occupies residues glycine 68–phenylalanine 90. The span at lysine 73–asparagine 86 shows a compositional bias: gly residues. Residue threonine 307 is modified to Phosphothreonine.

Interacts with DNAJC3. Interacts with HSF1 (via transactivation domain); this interaction results in the inhibition of heat shock- and HSF1-induced transcriptional activity during the attenuation and recovery phase period of the heat shock response. Interacts with BAG3.

It is found in the cytoplasm. The protein resides in the nucleus. It localises to the nucleolus. Interacts with HSP70 and can stimulate its ATPase activity. Stimulates the association between HSC70 and HIP. Negatively regulates heat shock-induced HSF1 transcriptional activity during the attenuation and recovery phase period of the heat shock response. Stimulates ATP hydrolysis and the folding of unfolded proteins mediated by HSPA1A/B (in vitro). The polypeptide is DnaJ homolog subfamily B member 1 (DNAJB1) (Bos taurus (Bovine)).